The chain runs to 468 residues: Chromosomal replication initiator protein DnaA (468 aa).

Residues 1-90 (MTQEKWGLLC…NSPMRPARAA (90 aa)) are domain I, interacts with DnaA modulators. Residues 91-126 (RPAAAAAAAAAAVEAPQVSAPRATDTSDVLDGLQAA) are domain II. The interval 127 to 348 (PLDPRFTFDS…GALTRLFAFA (222 aa)) is domain III, AAA+ region. 4 residues coordinate ATP: Gly-171, Gly-173, Lys-174, and Thr-175. The segment at 349–468 (SLVGREIDME…VEMLRRALEA (120 aa)) is domain IV, binds dsDNA.

The protein belongs to the DnaA family. Oligomerizes as a right-handed, spiral filament on DNA at oriC.

The protein resides in the cytoplasm. In terms of biological role, plays an essential role in the initiation and regulation of chromosomal replication. ATP-DnaA binds to the origin of replication (oriC) to initiate formation of the DNA replication initiation complex once per cell cycle. Binds the DnaA box (a 9 base pair repeat at the origin) and separates the double-stranded (ds)DNA. Forms a right-handed helical filament on oriC DNA; dsDNA binds to the exterior of the filament while single-stranded (ss)DNA is stabiized in the filament's interior. The ATP-DnaA-oriC complex binds and stabilizes one strand of the AT-rich DNA unwinding element (DUE), permitting loading of DNA polymerase. After initiation quickly degrades to an ADP-DnaA complex that is not apt for DNA replication. Binds acidic phospholipids. This Ruegeria pomeroyi (strain ATCC 700808 / DSM 15171 / DSS-3) (Silicibacter pomeroyi) protein is Chromosomal replication initiator protein DnaA.